A 264-amino-acid polypeptide reads, in one-letter code: Triosephosphate isomerase (264 aa).

13–15 is a binding site for substrate; sequence NWK. His-98 functions as the Electrophile in the catalytic mechanism. The active-site Proton acceptor is Glu-170. Substrate contacts are provided by residues Gly-176, Ser-216, and 237–238; that span reads GG.

The protein belongs to the triosephosphate isomerase family. Homodimer.

The protein localises to the cytoplasm. The catalysed reaction is D-glyceraldehyde 3-phosphate = dihydroxyacetone phosphate. The protein operates within carbohydrate biosynthesis; gluconeogenesis. It participates in carbohydrate degradation; glycolysis; D-glyceraldehyde 3-phosphate from glycerone phosphate: step 1/1. Functionally, involved in the gluconeogenesis. Catalyzes stereospecifically the conversion of dihydroxyacetone phosphate (DHAP) to D-glyceraldehyde-3-phosphate (G3P). This Protochlamydia amoebophila (strain UWE25) protein is Triosephosphate isomerase.